The primary structure comprises 887 residues: Probable LRR receptor-like serine/threonine-protein kinase At5g59680 (887 aa).

Positions 1–23 (MERSLELLLLLIRTLAIIHISQA) are cleaved as a signal peptide. The Extracellular segment spans residues 25–510 (SQQGFISLDC…TKSGKSFPVT (486 aa)). N-linked (GlcNAc...) asparagine glycosylation is found at Asn143, Asn230, Asn256, Asn289, Asn338, Asn363, Asn400, Asn416, Asn432, Asn445, Asn464, and Asn471. 3 LRR repeats span residues 411–434 (RITT…QNLT), 435–457 (TLEK…LSNM), and 459–481 (SLLV…LQRK). The chain crosses the membrane as a helical span at residues 511 to 531 (IVASVGSAAILIVVLVLVLFL). Topologically, residues 532-887 (RKKKPSAVEV…FDAEMIPRAR (356 aa)) are cytoplasmic. Phosphothreonine is present on Thr571. Residues 580-853 (NNFGRVVGEG…HVVIELKECL (274 aa)) form the Protein kinase domain. ATP is bound by residues 586–594 (VGEGGFGVV) and Lys608. At Tyr653 the chain carries Phosphotyrosine. Asp705 (proton acceptor) is an active-site residue. Position 739 is a phosphoserine (Ser739). A phosphothreonine mark is found at Thr740 and Thr745. Residue Tyr753 is modified to Phosphotyrosine.

The protein belongs to the protein kinase superfamily. Ser/Thr protein kinase family.

The protein localises to the membrane. It carries out the reaction L-seryl-[protein] + ATP = O-phospho-L-seryl-[protein] + ADP + H(+). It catalyses the reaction L-threonyl-[protein] + ATP = O-phospho-L-threonyl-[protein] + ADP + H(+). In Arabidopsis thaliana (Mouse-ear cress), this protein is Probable LRR receptor-like serine/threonine-protein kinase At5g59680.